The chain runs to 250 residues: UDP-2,3-diacylglucosamine hydrolase (250 aa).

Asp8, His10, Asp41, Asn79, and His114 together coordinate Mn(2+). Residue 79–80 (NR) coordinates substrate. 5 residues coordinate substrate: Asp122, Ser160, Asp172, Gln175, and His203. Positions 203 and 205 each coordinate Mn(2+).

It belongs to the LpxH family. It depends on Mn(2+) as a cofactor.

The protein resides in the cell inner membrane. It catalyses the reaction UDP-2-N,3-O-bis[(3R)-3-hydroxytetradecanoyl]-alpha-D-glucosamine + H2O = 2-N,3-O-bis[(3R)-3-hydroxytetradecanoyl]-alpha-D-glucosaminyl 1-phosphate + UMP + 2 H(+). It functions in the pathway glycolipid biosynthesis; lipid IV(A) biosynthesis; lipid IV(A) from (3R)-3-hydroxytetradecanoyl-[acyl-carrier-protein] and UDP-N-acetyl-alpha-D-glucosamine: step 4/6. Functionally, hydrolyzes the pyrophosphate bond of UDP-2,3-diacylglucosamine to yield 2,3-diacylglucosamine 1-phosphate (lipid X) and UMP by catalyzing the attack of water at the alpha-P atom. Involved in the biosynthesis of lipid A, a phosphorylated glycolipid that anchors the lipopolysaccharide to the outer membrane of the cell. The protein is UDP-2,3-diacylglucosamine hydrolase of Xylella fastidiosa (strain M12).